We begin with the raw amino-acid sequence, 185 residues long: Elongation factor P (185 aa).

Belongs to the elongation factor P family.

The protein localises to the cytoplasm. It functions in the pathway protein biosynthesis; polypeptide chain elongation. Its function is as follows. Involved in peptide bond synthesis. Stimulates efficient translation and peptide-bond synthesis on native or reconstituted 70S ribosomes in vitro. Probably functions indirectly by altering the affinity of the ribosome for aminoacyl-tRNA, thus increasing their reactivity as acceptors for peptidyl transferase. This Thermotoga maritima (strain ATCC 43589 / DSM 3109 / JCM 10099 / NBRC 100826 / MSB8) protein is Elongation factor P (efp).